We begin with the raw amino-acid sequence, 235 residues long: uncharacterized protein (235 aa).

Residues 27–47 (AMKLWSTWITLLILTFFCSEC) traverse the membrane as a helical segment. The CX domain maps to 124-185 (YFWGESKYVP…CCGYDCCSNS (62 aa)). A helical transmembrane segment spans residues 187–207 (IFTSIFSLLVILLIVSVLSIF).

It localises to the membrane. This is an uncharacterized protein from Caenorhabditis elegans.